The primary structure comprises 219 residues: Rho-related protein racN (219 aa).

GTP is bound at residue 12–19 (GDVTIGKT). Positions 33-41 (YIPTIFDNH) match the Effector region motif. GTP-binding positions include 58–62 (DTGGG) and 114–117 (TKTD). C216 carries the cysteine methyl ester modification. Residue C216 is the site of S-geranylgeranyl cysteine attachment. A propeptide spans 217-219 (IIC) (removed in mature form).

Belongs to the small GTPase superfamily. Rho family.

The protein resides in the cell membrane. The chain is Rho-related protein racN (racN) from Dictyostelium discoideum (Social amoeba).